The following is a 437-amino-acid chain: UDP-N-acetylmuramate--L-alanine ligase (437 aa).

G108 to S114 is a binding site for ATP.

This sequence belongs to the MurCDEF family.

Its subcellular location is the cytoplasm. It carries out the reaction UDP-N-acetyl-alpha-D-muramate + L-alanine + ATP = UDP-N-acetyl-alpha-D-muramoyl-L-alanine + ADP + phosphate + H(+). It participates in cell wall biogenesis; peptidoglycan biosynthesis. In terms of biological role, cell wall formation. This is UDP-N-acetylmuramate--L-alanine ligase from Staphylococcus haemolyticus (strain JCSC1435).